The sequence spans 228 residues: Uracil-DNA glycosylase (228 aa).

Asp65 acts as the Proton acceptor in catalysis.

This sequence belongs to the uracil-DNA glycosylase (UDG) superfamily. UNG family.

The protein localises to the cytoplasm. It carries out the reaction Hydrolyzes single-stranded DNA or mismatched double-stranded DNA and polynucleotides, releasing free uracil.. Excises uracil residues from the DNA which can arise as a result of misincorporation of dUMP residues by DNA polymerase or due to deamination of cytosine. This Lacticaseibacillus paracasei (strain ATCC 334 / BCRC 17002 / CCUG 31169 / CIP 107868 / KCTC 3260 / NRRL B-441) (Lactobacillus paracasei) protein is Uracil-DNA glycosylase.